Here is a 380-residue protein sequence, read N- to C-terminus: Queuine tRNA-ribosyltransferase (380 aa).

Aspartate 96 serves as the catalytic Proton acceptor. Residues 96–100 (DSGGF), aspartate 150, glutamine 193, and glycine 220 each bind substrate. The interval 251-257 (GVGAPDS) is RNA binding. The active-site Nucleophile is aspartate 270. Residues 275–279 (TRIAR) are RNA binding; important for wobble base 34 recognition. 4 residues coordinate Zn(2+): cysteine 308, cysteine 310, cysteine 313, and histidine 339.

Belongs to the queuine tRNA-ribosyltransferase family. As to quaternary structure, homodimer. Within each dimer, one monomer is responsible for RNA recognition and catalysis, while the other monomer binds to the replacement base PreQ1. The cofactor is Zn(2+).

The catalysed reaction is 7-aminomethyl-7-carbaguanine + guanosine(34) in tRNA = 7-aminomethyl-7-carbaguanosine(34) in tRNA + guanine. Its pathway is tRNA modification; tRNA-queuosine biosynthesis. Catalyzes the base-exchange of a guanine (G) residue with the queuine precursor 7-aminomethyl-7-deazaguanine (PreQ1) at position 34 (anticodon wobble position) in tRNAs with GU(N) anticodons (tRNA-Asp, -Asn, -His and -Tyr). Catalysis occurs through a double-displacement mechanism. The nucleophile active site attacks the C1' of nucleotide 34 to detach the guanine base from the RNA, forming a covalent enzyme-RNA intermediate. The proton acceptor active site deprotonates the incoming PreQ1, allowing a nucleophilic attack on the C1' of the ribose to form the product. After dissociation, two additional enzymatic reactions on the tRNA convert PreQ1 to queuine (Q), resulting in the hypermodified nucleoside queuosine (7-(((4,5-cis-dihydroxy-2-cyclopenten-1-yl)amino)methyl)-7-deazaguanosine). This is Queuine tRNA-ribosyltransferase from Streptococcus sanguinis (strain SK36).